Consider the following 393-residue polypeptide: Formate-dependent phosphoribosylglycinamide formyltransferase (393 aa).

N(1)-(5-phospho-beta-D-ribosyl)glycinamide contacts are provided by residues 22–23 and E82; that span reads EL. Residues R114, K155, 160–165, 195–198, and E203 each bind ATP; these read SSGKGQ and EGFI. One can recognise an ATP-grasp domain in the interval 119 to 308; sequence RLAAEELGLP…EFALHARAIL (190 aa). Mg(2+)-binding residues include E267 and E279. N(1)-(5-phospho-beta-D-ribosyl)glycinamide contacts are provided by residues D286, K356, and 363–364; that span reads RR.

This sequence belongs to the PurK/PurT family. As to quaternary structure, homodimer.

It catalyses the reaction N(1)-(5-phospho-beta-D-ribosyl)glycinamide + formate + ATP = N(2)-formyl-N(1)-(5-phospho-beta-D-ribosyl)glycinamide + ADP + phosphate + H(+). It functions in the pathway purine metabolism; IMP biosynthesis via de novo pathway; N(2)-formyl-N(1)-(5-phospho-D-ribosyl)glycinamide from N(1)-(5-phospho-D-ribosyl)glycinamide (formate route): step 1/1. In terms of biological role, involved in the de novo purine biosynthesis. Catalyzes the transfer of formate to 5-phospho-ribosyl-glycinamide (GAR), producing 5-phospho-ribosyl-N-formylglycinamide (FGAR). Formate is provided by PurU via hydrolysis of 10-formyl-tetrahydrofolate. This is Formate-dependent phosphoribosylglycinamide formyltransferase from Pseudomonas aeruginosa (strain LESB58).